The primary structure comprises 301 residues: Protein p34 (301 aa).

Transmembrane regions (helical) follow at residues 15–35, 40–60, 83–103, 120–140, and 171–191; these read YLSVTTALIILSIKLYAWVVT, ILAALIDSMLDITSSFINLIA, TIFSQSIFFFASAFFVGFSSV, TVMYVCIFLTIILVFYQTYVI, and LSDYFWFVDPLFGVVISLYIF.

Belongs to the cation diffusion facilitator (CDF) transporter (TC 2.A.4) family.

The protein resides in the cell membrane. This chain is Protein p34 (p34), found in Rickettsia rickettsii (strain Sheila Smith).